Reading from the N-terminus, the 285-residue chain is Large ribosomal subunit protein uL2 (285 aa).

The interval G215–Y285 is disordered. The segment covering W256–S272 has biased composition (basic residues).

This sequence belongs to the universal ribosomal protein uL2 family. In terms of assembly, part of the 50S ribosomal subunit. Forms a bridge to the 30S subunit in the 70S ribosome.

One of the primary rRNA binding proteins. Required for association of the 30S and 50S subunits to form the 70S ribosome, for tRNA binding and peptide bond formation. It has been suggested to have peptidyltransferase activity; this is somewhat controversial. Makes several contacts with the 16S rRNA in the 70S ribosome. The polypeptide is Large ribosomal subunit protein uL2 (Mycoplasma genitalium (strain ATCC 33530 / DSM 19775 / NCTC 10195 / G37) (Mycoplasmoides genitalium)).